Reading from the N-terminus, the 516-residue chain is Golgi-associated kinase 1B (516 aa).

Over M1–N37 the chain is Cytoplasmic. The chain crosses the membrane as a helical; Signal-anchor for type II membrane protein span at residues L38–V55. Residues G56 to E516 lie on the Extracellular side of the membrane. N286 carries an N-linked (GlcNAc...) asparagine glycan.

It belongs to the GASK family.

Its subcellular location is the golgi apparatus membrane. This is Golgi-associated kinase 1B from Rattus norvegicus (Rat).